The sequence spans 757 residues: Transferrin receptor protein 1 (757 aa).

The Cytoplasmic segment spans residues 1–67 (MMDQARSAIS…KHRRLNGRLC (67 aa)). The mediates interaction with SH3BP4 stretch occupies residues 1–67 (MMDQARSAIS…KHRRLNGRLC (67 aa)). Ser-10 and Ser-19 each carry phosphoserine. Tyr-20 carries the phosphotyrosine modification. Positions 20–23 (YTRF) match the Endocytosis signal motif. Thr-21 carries the post-translational modification Phosphothreonine. Ser-24 is modified (phosphoserine). The Stop-transfer sequence signature appears at 58-61 (KHRR). Residue Cys-67 is the site of S-palmitoyl cysteine attachment. Residues 68–88 (FGTIAVVIFFLIGFMIGYLGY) form a helical; Signal-anchor for type II membrane protein membrane-spanning segment. Residues 89–757 (CKRTEQKDCV…GDIWDIDNEF (669 aa)) lie on the Extracellular side of the membrane. An O-linked (GalNAc...) threonine glycan is attached at Thr-103. Residues 220 to 310 (SKATTVSGKL…GTGDPYTPGF (91 aa)) enclose the PA domain. N-linked (GlcNAc...) asparagine glycans are attached at residues Asn-248 and Asn-314. Residues 566 to 757 (NLDTYEKLIQ…GDIWDIDNEF (192 aa)) are ligand-binding. Residues 643-645 (RGD) carry the Cell attachment site motif. N-linked (GlcNAc...) asparagine glycans are attached at residues Asn-719 and Asn-724.

Belongs to the peptidase M28 family. M28B subfamily. As to quaternary structure, homodimer; disulfide-linked. Binds one transferrin molecule per subunit. Interacts with SH3BP4. Interacts with STEAP3; facilitates TFRC endocytosis in erythroid precursor cells. Post-translationally, stearoylated by ZDHHC6 which inhibits TFRC-mediated activation of the JNK pathway and promotes mitochondrial fragmentation. Stearoylation does not affect iron uptake. N- and O-glycosylated, phosphorylated and palmitoylated.

The protein localises to the cell membrane. The protein resides in the melanosome. Its function is as follows. Cellular uptake of iron occurs via receptor-mediated endocytosis of ligand-occupied transferrin receptor into specialized endosomes. Endosomal acidification leads to iron release. The apotransferrin-receptor complex is then recycled to the cell surface with a return to neutral pH and the concomitant loss of affinity of apotransferrin for its receptor. Transferrin receptor is necessary for development of erythrocytes and the nervous system. Positively regulates T and B cell proliferation through iron uptake. Acts as a lipid sensor that regulates mitochondrial fusion by regulating activation of the JNK pathway. When dietary levels of stearate (C18:0) are low, promotes activation of the JNK pathway, resulting in HUWE1-mediated ubiquitination and subsequent degradation of the mitofusin MFN2 and inhibition of mitochondrial fusion. When dietary levels of stearate (C18:0) are high, TFRC stearoylation inhibits activation of the JNK pathway and thus degradation of the mitofusin MFN2. Mediates uptake of NICOL1 into fibroblasts where it may regulate extracellular matrix production. In Cricetulus griseus (Chinese hamster), this protein is Transferrin receptor protein 1 (TFRC).